The primary structure comprises 544 residues: Membrane protein insertase YidC (544 aa).

A helical transmembrane segment spans residues 4 to 24 (KALLALVLSAAVLLIYQIFIY). Positions 44–78 (NPAAPVSPQTPADEPSSGSAANPETAAALPVDGTE) are disordered. A run of 3 helical transmembrane segments spans residues 363-383 (NYGI…WPLG), 434-454 (LPMI…LYAI), and 508-528 (PVIF…YWLF).

Belongs to the OXA1/ALB3/YidC family. Type 1 subfamily. Interacts with the Sec translocase complex via SecD. Specifically interacts with transmembrane segments of nascent integral membrane proteins during membrane integration.

It localises to the cell inner membrane. Functionally, required for the insertion and/or proper folding and/or complex formation of integral membrane proteins into the membrane. Involved in integration of membrane proteins that insert both dependently and independently of the Sec translocase complex, as well as at least some lipoproteins. Aids folding of multispanning membrane proteins. This chain is Membrane protein insertase YidC, found in Syntrophus aciditrophicus (strain SB).